Consider the following 262-residue polypeptide: Proline-rich protein 23C (262 aa).

Disordered stretches follow at residues 1–52 (MGSR…AGTP) and 225–262 (VPSS…LFQE). Residues 226-242 (PSSPLQPLPPSPSPGPH) are compositionally biased toward pro residues. Basic and acidic residues predominate over residues 243–252 (ARPELPERPP). Residues 253-262 (CKVRRRLFQE) show a composition bias toward basic residues.

It belongs to the PRR23 family.

The sequence is that of Proline-rich protein 23C (PRR23C) from Homo sapiens (Human).